The following is a 207-amino-acid chain: Cytochrome c oxidase subunit 3 (207 aa).

The next 5 membrane-spanning stretches (helical) occupy residues 28-48, 70-90, 102-122, 144-164, and 186-206; these read FLGFWLFLGGETVLFASLFAT, VVFMATMLLLTSSLTSVYAIY, LWFGITVLLGAGFLGLEIYEF, LVGTHGSHVAFGLLWILTLMI, and WHFIDVVWVFIFTVVYLMGMV.

It belongs to the cytochrome c oxidase subunit 3 family.

It localises to the cell membrane. It carries out the reaction 4 Fe(II)-[cytochrome c] + O2 + 8 H(+)(in) = 4 Fe(III)-[cytochrome c] + 2 H2O + 4 H(+)(out). In Bacillus sp. (strain PS3), this protein is Cytochrome c oxidase subunit 3 (ctaE).